The sequence spans 407 residues: Serine/threonine transporter SstT (407 aa).

9 helical membrane passes run 12–32 (GNLI…GISS), 42–62 (LGIL…FILI), 81–101 (IIIL…LANF), 141–161 (ALSS…GIAL), 179–199 (VLKI…GLVA), 218–238 (ILLV…IVFF), 245–267 (FPLI…SSAA), 288–308 (ISIP…IAIL), and 330–350 (IIAT…LLLI).

This sequence belongs to the dicarboxylate/amino acid:cation symporter (DAACS) (TC 2.A.23) family.

Its subcellular location is the cell inner membrane. The enzyme catalyses L-serine(in) + Na(+)(in) = L-serine(out) + Na(+)(out). It carries out the reaction L-threonine(in) + Na(+)(in) = L-threonine(out) + Na(+)(out). In terms of biological role, involved in the import of serine and threonine into the cell, with the concomitant import of sodium (symport system). In Campylobacter jejuni subsp. jejuni serotype O:2 (strain ATCC 700819 / NCTC 11168), this protein is Serine/threonine transporter SstT.